A 92-amino-acid chain; its full sequence is Large ribosomal subunit protein uL23 (92 aa).

The protein belongs to the universal ribosomal protein uL23 family. In terms of assembly, part of the 50S ribosomal subunit. Contacts protein L29, and trigger factor when it is bound to the ribosome.

In terms of biological role, one of the early assembly proteins it binds 23S rRNA. One of the proteins that surrounds the polypeptide exit tunnel on the outside of the ribosome. Forms the main docking site for trigger factor binding to the ribosome. This chain is Large ribosomal subunit protein uL23, found in Bdellovibrio bacteriovorus (strain ATCC 15356 / DSM 50701 / NCIMB 9529 / HD100).